The following is a 297-amino-acid chain: ATP phosphoribosyltransferase (297 aa).

This sequence belongs to the ATP phosphoribosyltransferase family.

The protein resides in the cytoplasm. It carries out the reaction 1-(5-phospho-beta-D-ribosyl)-ATP + diphosphate = 5-phospho-alpha-D-ribose 1-diphosphate + ATP. Its pathway is amino-acid biosynthesis; L-histidine biosynthesis; L-histidine from 5-phospho-alpha-D-ribose 1-diphosphate: step 1/9. In terms of biological role, catalyzes the condensation of ATP and 5-phosphoribose 1-diphosphate to form N'-(5'-phosphoribosyl)-ATP (PR-ATP). Has a crucial role in the pathway because the rate of histidine biosynthesis seems to be controlled primarily by regulation of the enzymatic activity. The sequence is that of ATP phosphoribosyltransferase (HIS1) from Kluyveromyces lactis (strain ATCC 8585 / CBS 2359 / DSM 70799 / NBRC 1267 / NRRL Y-1140 / WM37) (Yeast).